The chain runs to 525 residues: Beta-galactoside alpha-2,6-sialyltransferase 2 (525 aa).

Over 1 to 11 the chain is Cytoplasmic; sequence MKPHLKQWRQR. Residues 12–32 form a helical; Signal-anchor for type II membrane protein membrane-spanning segment; that stretch reads MLFAIFVWGLLFLAIFIYFTN. Over 33–525 the chain is Lumenal; the sequence is SNPAAPMPSS…PVTRPNNTNT (493 aa). 2 disordered regions span residues 85 to 107 and 145 to 183; these read SASP…DGFD and RQGA…PEEA. 3 cysteine pairs are disulfide-bonded: Cys249/Cys515, Cys292/Cys444, and Cys462/Cys473. Asn303 and Asn333 each carry an N-linked (GlcNAc...) asparagine glycan. Asn521 carries an N-linked (GlcNAc...) asparagine glycan.

It belongs to the glycosyltransferase 29 family.

It localises to the golgi apparatus. Its subcellular location is the golgi stack membrane. It carries out the reaction a beta-D-galactoside + CMP-N-acetyl-beta-neuraminate = an N-acetyl-alpha-neuraminyl-(2-&gt;6)-beta-D-galactosyl derivative + CMP + H(+). Functionally, transfers sialic acid from the donor of substrate CMP-sialic acid to galactose containing acceptor substrates. Has alpha-2,6-sialyltransferase activity toward oligosaccharides that have the Gal-beta-1,4-GlcNAc sequence at the non-reducing end of their carbohydrate groups, but it has weak or no activities toward glycoproteins and glycolipids. The protein is Beta-galactoside alpha-2,6-sialyltransferase 2 (St6gal2) of Rattus norvegicus (Rat).